Here is a 152-residue protein sequence, read N- to C-terminus: UPF0266 membrane protein YobD (152 aa).

A run of 3 helical transmembrane segments spans residues 6-26 (LVLI…QFIM), 45-65 (IDSV…VTNH), and 67-87 (ALIT…IFWI).

Belongs to the UPF0266 family.

It is found in the cell inner membrane. The polypeptide is UPF0266 membrane protein YobD (Escherichia coli O45:K1 (strain S88 / ExPEC)).